A 478-amino-acid polypeptide reads, in one-letter code: PRAME family member 27 (478 aa).

The LRR 1 repeat unit spans residues 17 to 40 (RSLLRDQALAMSTLEELPTELFPP). One copy of the LRR 1; degenerate repeat lies at 99–126 (RWKLQVLDLQDVCENFWMVWSEAMARGS). The LRR 2; degenerate repeat unit spans residues 181–205 (HLCCKKLKILGMPFRNIRSILKMVN). One copy of the LRR 3; degenerate repeat lies at 206–232 (LDCIQEVEVNCKWVLPILTQFTPYLGH). The stretch at 233–268 (MRNLQKLVLSHMDVSRYVSPEQKKEIVTQFTTQFLK) is one LRR 4; degenerate repeat. LRR repeat units follow at residues 269–294 (LHCL…LSCL), 295–326 (KTSL…SQLK), 327–348 (TLDL…ILLE), 351–378 (AATL…ALSR), and 379–403 (CFEL…LLSH).

This sequence belongs to the PRAME family.

The polypeptide is PRAME family member 27 (Homo sapiens (Human)).